Here is a 109-residue protein sequence, read N- to C-terminus: Large ribosomal subunit protein uL22 (109 aa).

It belongs to the universal ribosomal protein uL22 family. Part of the 50S ribosomal subunit.

This protein binds specifically to 23S rRNA; its binding is stimulated by other ribosomal proteins, e.g. L4, L17, and L20. It is important during the early stages of 50S assembly. It makes multiple contacts with different domains of the 23S rRNA in the assembled 50S subunit and ribosome. Functionally, the globular domain of the protein is located near the polypeptide exit tunnel on the outside of the subunit, while an extended beta-hairpin is found that lines the wall of the exit tunnel in the center of the 70S ribosome. In Bordetella petrii (strain ATCC BAA-461 / DSM 12804 / CCUG 43448), this protein is Large ribosomal subunit protein uL22.